The sequence spans 525 residues: GMP synthase [glutamine-hydrolyzing] (525 aa).

The Glutamine amidotransferase type-1 domain maps to R9–L207. C86 functions as the Nucleophile in the catalytic mechanism. Catalysis depends on residues H181 and E183. The GMPS ATP-PPase domain maps to W208–R400. Residue S235–S241 coordinates ATP.

In terms of assembly, homodimer.

The enzyme catalyses XMP + L-glutamine + ATP + H2O = GMP + L-glutamate + AMP + diphosphate + 2 H(+). It functions in the pathway purine metabolism; GMP biosynthesis; GMP from XMP (L-Gln route): step 1/1. Catalyzes the synthesis of GMP from XMP. This is GMP synthase [glutamine-hydrolyzing] from Salmonella typhimurium (strain LT2 / SGSC1412 / ATCC 700720).